Here is a 115-residue protein sequence, read N- to C-terminus: Photosystem II reaction center Psb28 protein (115 aa).

The protein belongs to the Psb28 family. As to quaternary structure, part of the photosystem II complex.

The protein resides in the plastid. It is found in the chloroplast thylakoid membrane. This Phaeodactylum tricornutum (strain CCAP 1055/1) protein is Photosystem II reaction center Psb28 protein.